We begin with the raw amino-acid sequence, 361 residues long: Eukaryotic translation initiation factor 3 subunit F (361 aa).

Residues 1–86 (MATPAVPVSA…PAPALPGPAL (86 aa)) are disordered. An N-acetylalanine modification is found at Ala-2. 2 stretches are compositionally biased toward pro residues: residues 9–20 (SAPPATPAPVPA) and 30–40 (VPAPTPAPAAA). Low complexity predominate over residues 41–78 (PVPAAAPASSSDPAAAAATTAAPGQTPASAQAPAQTPA). Ser-50 carries the post-translational modification Phosphoserine; by CDK11; in vitro. Positions 96–226 (VRLHPVILAS…IKAYVSTLMG (131 aa)) constitute an MPN domain. An N6-acetyllysine modification is found at Lys-242. The residue at position 262 (Ser-262) is a Phosphoserine.

This sequence belongs to the eIF-3 subunit F family. In terms of assembly, component of the eukaryotic translation initiation factor 3 (eIF-3) complex, which is composed of 13 subunits: EIF3A, EIF3B, EIF3C, EIF3D, EIF3E, EIF3F, EIF3G, EIF3H, EIF3I, EIF3J, EIF3K, EIF3L and EIF3M. The eIF-3 complex appears to include 3 stable modules: module A is composed of EIF3A, EIF3B, EIF3G and EIF3I; module B is composed of EIF3F, EIF3H, and EIF3M; and module C is composed of EIF3C, EIF3D, EIF3E, EIF3K and EIF3L. EIF3C of module C binds EIF3B of module A and EIF3H of module B, thereby linking the three modules. EIF3J is a labile subunit that binds to the eIF-3 complex via EIF3B. The eIF-3 complex interacts with RPS6KB1 under conditions of nutrient depletion. Mitogenic stimulation leads to binding and activation of a complex composed of MTOR and RPTOR, leading to phosphorylation and release of RPS6KB1 and binding of EIF4B to eIF-3. Interacts with RNF139; the interaction leads to protein translation inhibitions in a ubiquitination-dependent manner. Interacts with DTX1, the interaction is required for deubiquitinating activity towards NOTCH1. Phosphorylation is enhanced upon serum stimulation. Phosphorylated during apoptosis by caspase-processed CDK11.

Its subcellular location is the cytoplasm. The enzyme catalyses Thiol-dependent hydrolysis of ester, thioester, amide, peptide and isopeptide bonds formed by the C-terminal Gly of ubiquitin (a 76-residue protein attached to proteins as an intracellular targeting signal).. Functionally, component of the eukaryotic translation initiation factor 3 (eIF-3) complex, which is required for several steps in the initiation of protein synthesis. The eIF-3 complex associates with the 40S ribosome and facilitates the recruitment of eIF-1, eIF-1A, eIF-2:GTP:methionyl-tRNAi and eIF-5 to form the 43S pre-initiation complex (43S PIC). The eIF-3 complex stimulates mRNA recruitment to the 43S PIC and scanning of the mRNA for AUG recognition. The eIF-3 complex is also required for disassembly and recycling of post-termination ribosomal complexes and subsequently prevents premature joining of the 40S and 60S ribosomal subunits prior to initiation. The eIF-3 complex specifically targets and initiates translation of a subset of mRNAs involved in cell proliferation, including cell cycling, differentiation and apoptosis, and uses different modes of RNA stem-loop binding to exert either translational activation or repression. Its function is as follows. Deubiquitinates activated NOTCH1, promoting its nuclear import, thereby acting as a positive regulator of Notch signaling. This Pan troglodytes (Chimpanzee) protein is Eukaryotic translation initiation factor 3 subunit F.